The primary structure comprises 1225 residues: Chromosome-associated kinesin KIF4 (1225 aa).

Residues I9–I338 enclose the Kinesin motor domain. G88–T95 contacts ATP. Residues E352–V1003 adopt a coiled-coil conformation. Disordered stretches follow at residues Q498–Q520, N717–G744, and G1006–E1047. Residues G507 to Q520 are compositionally biased toward polar residues. A compositionally biased stretch (basic and acidic residues) spans R719–Q738. The segment at A1004–D1225 is globular.

It belongs to the TRAFAC class myosin-kinesin ATPase superfamily. Kinesin family. Chromokinesin subfamily. The cofactor is [2Fe-2S] cluster. It depends on [4Fe-4S] cluster as a cofactor. In terms of tissue distribution, expressed in proliferating cells; neuroepithelium of embryos.

The protein resides in the nucleus. Its subcellular location is the chromosome. The protein localises to the cytoplasm. It localises to the cytoskeleton. Its function is as follows. Iron-sulfur (Fe-S) cluster binding motor protein that has a role in chromosome segregation during mitosis. Required for mitotic chromosomal positioning and bipolar spindle stabilization. This chain is Chromosome-associated kinesin KIF4 (KIF4), found in Gallus gallus (Chicken).